Here is a 365-residue protein sequence, read N- to C-terminus: 2-aminoethylphosphonate--pyruvate transaminase (365 aa).

Residue Lys-194 is modified to N6-(pyridoxal phosphate)lysine.

The protein belongs to the class-V pyridoxal-phosphate-dependent aminotransferase family. PhnW subfamily. Homodimer. Pyridoxal 5'-phosphate is required as a cofactor.

The enzyme catalyses (2-aminoethyl)phosphonate + pyruvate = phosphonoacetaldehyde + L-alanine. Involved in phosphonate degradation. This is 2-aminoethylphosphonate--pyruvate transaminase from Bacillus cereus (strain AH187).